A 380-amino-acid chain; its full sequence is Beta sliding clamp (380 aa).

It belongs to the beta sliding clamp family. In terms of assembly, forms a ring-shaped head-to-tail homodimer around DNA which binds and tethers DNA polymerases and other proteins to the DNA. The DNA replisome complex has a single clamp-loading complex (3 tau and 1 each of delta, delta', psi and chi subunits) which binds 3 Pol III cores (1 core on the leading strand and 2 on the lagging strand) each with a beta sliding clamp dimer. Additional proteins in the replisome are other copies of gamma, psi and chi, Ssb, DNA helicase and RNA primase.

It localises to the cytoplasm. In terms of biological role, confers DNA tethering and processivity to DNA polymerases and other proteins. Acts as a clamp, forming a ring around DNA (a reaction catalyzed by the clamp-loading complex) which diffuses in an ATP-independent manner freely and bidirectionally along dsDNA. Initially characterized for its ability to contact the catalytic subunit of DNA polymerase III (Pol III), a complex, multichain enzyme responsible for most of the replicative synthesis in bacteria; Pol III exhibits 3'-5' exonuclease proofreading activity. The beta chain is required for initiation of replication as well as for processivity of DNA replication. In Mycoplasma genitalium (strain ATCC 33530 / DSM 19775 / NCTC 10195 / G37) (Mycoplasmoides genitalium), this protein is Beta sliding clamp (dnaN).